Reading from the N-terminus, the 622-residue chain is UvrABC system protein C (622 aa).

Residues 13 to 92 (DKPGVYLMKN…IKENRPKYNV (80 aa)) enclose the GIY-YIG domain. One can recognise a UVR domain in the interval 205-240 (DELIKKIEEKMKRAAEKMDFEGAAHYRDQRQALLDI).

This sequence belongs to the UvrC family. Interacts with UvrB in an incision complex.

Its subcellular location is the cytoplasm. Functionally, the UvrABC repair system catalyzes the recognition and processing of DNA lesions. UvrC both incises the 5' and 3' sides of the lesion. The N-terminal half is responsible for the 3' incision and the C-terminal half is responsible for the 5' incision. This chain is UvrABC system protein C, found in Alkaliphilus metalliredigens (strain QYMF).